The chain runs to 469 residues: Alpha-galactosidase (469 aa).

Positions 1 to 17 (MFPFFFALFFSSTDVLA) are cleaved as a signal peptide. Cysteines 41 and 73 form a disulfide. Substrate-binding residues include aspartate 71 and aspartate 72. Asparagine 81 is a glycosylation site (N-linked (GlcNAc...) asparagine). Cysteine 120 and cysteine 150 are disulfide-bonded. Residue lysine 146 coordinates substrate. Aspartate 148 functions as the Nucleophile in the catalytic mechanism. A glycan (N-linked (GlcNAc...) asparagine) is linked at asparagine 174. Arginine 204 is a binding site for substrate. Aspartate 208 acts as the Proton donor in catalysis. 2 disulfide bridges follow: cysteine 220–cysteine 236 and cysteine 222–cysteine 229. A substrate-binding site is contributed by glutamine 250. N-linked (GlcNAc...) asparagine glycans are attached at residues asparagine 269, asparagine 369, asparagine 402, asparagine 412, asparagine 421, asparagine 426, and asparagine 434.

Belongs to the glycosyl hydrolase 27 family. In terms of assembly, homotetramer.

The protein resides in the secreted. The catalysed reaction is Hydrolysis of terminal, non-reducing alpha-D-galactose residues in alpha-D-galactosides, including galactose oligosaccharides, galactomannans and galactolipids.. This is Alpha-galactosidase (MEL) from Lachancea cidri (Yeast).